Consider the following 1161-residue polypeptide: MVKLSIVLTPQFLSHDQGQLTKELQQHVKSVTCPCEYLRKVINTLADHHHRGTDFGGSPWLHIIIAFPTSYKVVITLWIVYLWVSLLKTIFWSRNGHDGSTDVQQRAWRSNRRRQEGLRSICMHTKKRVSSFRGNKIGLKDVITLRRHVETKVRAKIRKRKVTTKINRHDKINGKRKTARKQKMFQRAQELRRRAEDYHKCKIPPSARKALCNWVRMAAAEHRHSSGLPYWPYLTAETLKNRMGHQPPPPTQQHCITDNSLSLKTPLECLLTPLPPSADDNLKTPPECLLTPLPPSADDNLKTPPECLLTPLPPSAPPSAPPSADDNLKTRAECLLHPLPPSADDNLKTPSERQLTPLPPSAPPSADDNIKTTAERLRGPLPPSADDNLKTPSERQLTPLPPSAPPSADDNIKTPAEHLRGPLPPSADDNLKTPSERQLTPLPPSAPPSADDNIKTPAERLRGPLPPSADDNLKTPSERQLTPLPPSAPPSADDNIKTPAEHLRGPLPPSADDNLKTPSERQLTPLPPSAPPSADDNIKTTAEHLRGPLPPSADDNLKTPSERQLTPLPPSAPPSADDNIKTPAEHLQFRFHPQRMIISRDLPSVSSLPFHPQLHPQQMIISRYLLSICGFRFHRQRMIISRHLPSVSSLPFHPQLHPQQMIISRHLPSVCGGRFHPQPMIISRHLPSVSSLPFHPQLHPQQMIISRHLPSVCGGRFHPQPMIISRHLPSVSSLPFHPQLHPQQMIISRHLPSVCGGRFHPQPMIISRHLPSVSSLPFHPQLHPQQMIISRHLPSVCGGRFHPQPMIISRHLPSVSSLPFHPQLHPQQMIISRHLPSVCGGRFHPQPMIISRHLPSVSSLPFHPQLHPQQMIISRHLPSVCGERLWVPLPPSADDNLKTPSKRQLTPLPPSAPPSADDNIKTPAERLRGPLPPSADDNLKTPSKRQLTPLPPSAPPSADDNIKTPAERLRGPLPPSADDNLKTPSERQLTPLPPSAPPSADDNIKTPAERLRGPLPPSADDNLKTPSERQLTPLPPSAPTSADDNIKTPAERLRGPLPPSADDNLKTPPLATQEAEAEKPRKPKRQRAAEMEPPPEPKRRRVGDVEPSRKPKRRRAADVEPSSPEPKRRRVGDVEPSRKPKRRRAADVEPSSPEPKRRRLS.

The helical transmembrane segment at 63–87 (IIIAFPTSYKVVITLWIVYLWVSLL) threads the bilayer. Disordered regions lie at residues 278–580 (ADDN…DDNI) and 892–1161 (SADD…RRLS). Residues 311-321 (PLPPSAPPSAP) are compositionally biased toward pro residues. 9 stretches are compositionally biased toward basic and acidic residues: residues 368-378 (DNIKTTAERLR), 410-420 (DNIKTPAEHLR), 452-462 (DNIKTPAERLR), 494-504 (DNIKTPAEHLR), 536-546 (DNIKTTAEHLR), 918-928 (DNIKTPAERLR), 960-970 (DNIKTPAERLR), 1002-1012 (DNIKTPAERLR), and 1044-1054 (DNIKTPAERLR).

Belongs to the NPIP family.

Its subcellular location is the membrane. The chain is Nuclear pore complex-interacting protein family member B11 (NPIPB11) from Homo sapiens (Human).